Here is a 356-residue protein sequence, read N- to C-terminus: UDP-N-acetylglucosamine--N-acetylmuramyl-(pentapeptide) pyrophosphoryl-undecaprenol N-acetylglucosamine transferase (356 aa).

UDP-N-acetyl-alpha-D-glucosamine-binding positions include 14-16 (TGG), N126, R162, S190, I244, and Q289.

This sequence belongs to the glycosyltransferase 28 family. MurG subfamily.

Its subcellular location is the cell inner membrane. It carries out the reaction di-trans,octa-cis-undecaprenyl diphospho-N-acetyl-alpha-D-muramoyl-L-alanyl-D-glutamyl-meso-2,6-diaminopimeloyl-D-alanyl-D-alanine + UDP-N-acetyl-alpha-D-glucosamine = di-trans,octa-cis-undecaprenyl diphospho-[N-acetyl-alpha-D-glucosaminyl-(1-&gt;4)]-N-acetyl-alpha-D-muramoyl-L-alanyl-D-glutamyl-meso-2,6-diaminopimeloyl-D-alanyl-D-alanine + UDP + H(+). It participates in cell wall biogenesis; peptidoglycan biosynthesis. In terms of biological role, cell wall formation. Catalyzes the transfer of a GlcNAc subunit on undecaprenyl-pyrophosphoryl-MurNAc-pentapeptide (lipid intermediate I) to form undecaprenyl-pyrophosphoryl-MurNAc-(pentapeptide)GlcNAc (lipid intermediate II). The polypeptide is UDP-N-acetylglucosamine--N-acetylmuramyl-(pentapeptide) pyrophosphoryl-undecaprenol N-acetylglucosamine transferase (Cupriavidus necator (strain ATCC 17699 / DSM 428 / KCTC 22496 / NCIMB 10442 / H16 / Stanier 337) (Ralstonia eutropha)).